Here is a 124-residue protein sequence, read N- to C-terminus: Astakine (124 aa).

The first 21 residues, 1–21 (MAVSSAVRMLSVACLVVSAAG), serve as a signal peptide directing secretion. Cystine bridges form between cysteine 28–cysteine 40, cysteine 34–cysteine 52, cysteine 39–cysteine 91, cysteine 62–cysteine 99, and cysteine 93–cysteine 106.

It belongs to the AVIT (prokineticin) family.

It is found in the secreted. Cytokine directly involved in hematopoiesis. This chain is Astakine, found in Penaeus monodon (Giant tiger prawn).